We begin with the raw amino-acid sequence, 513 residues long: ATP synthase subunit alpha (513 aa).

169-176 (GDRQIGKT) lines the ATP pocket.

The protein belongs to the ATPase alpha/beta chains family. In terms of assembly, F-type ATPases have 2 components, CF(1) - the catalytic core - and CF(0) - the membrane proton channel. CF(1) has five subunits: alpha(3), beta(3), gamma(1), delta(1), epsilon(1). CF(0) has three main subunits: a(1), b(2) and c(9-12). The alpha and beta chains form an alternating ring which encloses part of the gamma chain. CF(1) is attached to CF(0) by a central stalk formed by the gamma and epsilon chains, while a peripheral stalk is formed by the delta and b chains.

Its subcellular location is the cell inner membrane. The enzyme catalyses ATP + H2O + 4 H(+)(in) = ADP + phosphate + 5 H(+)(out). Produces ATP from ADP in the presence of a proton gradient across the membrane. The alpha chain is a regulatory subunit. The sequence is that of ATP synthase subunit alpha from Francisella tularensis subsp. tularensis (strain WY96-3418).